Here is an 83-residue protein sequence, read N- to C-terminus: CLAVATA3/ESR (CLE)-related protein 3 (83 aa).

The signal sequence occupies residues 1–24 (MASLKLWVCLVLLLVLELTSVHEC). A coiled-coil region spans residues 38–58 (RLKKIRRELFERLKEMKGRSE). The tract at residues 53–83 (MKGRSEGEETILGNTLDSKRLSPGGPDPRHH) is disordered. A hydroxyproline mark is found at Pro75 and Pro78. The O-linked (Ara...) hydroxyproline glycan is linked to Pro78.

Belongs to the CLV3/ESR signal peptide family. Post-translationally, the O-glycosylation (arabinosylation) of the hydroxyproline Pro-78 enhances binding affinity of the CLE3p peptide for its receptor. Mostly expressed in roots, stems and apex, and, to a lower extent, in seedlings, leaves, flowers, siliques and pollen.

It is found in the secreted. The protein localises to the extracellular space. In terms of biological role, extracellular signal peptide that regulates cell fate. The polypeptide is CLAVATA3/ESR (CLE)-related protein 3 (Arabidopsis thaliana (Mouse-ear cress)).